The sequence spans 191 residues: Guanylate kinase (191 aa).

A Guanylate kinase-like domain is found at Gly-6–Leu-184. Ser-13–Ser-20 contacts ATP.

The protein belongs to the guanylate kinase family.

The protein resides in the cytoplasm. The enzyme catalyses GMP + ATP = GDP + ADP. Its function is as follows. Essential for recycling GMP and indirectly, cGMP. In Rickettsia bellii (strain RML369-C), this protein is Guanylate kinase.